The following is a 591-amino-acid chain: MENPPDQTESKETLQQPITRRRTKGGLLTMPFIIANEGFEKVASYGLLQNMILYLMSDYRLGLVKGQTVLFMWVAATNFMPLVGAFLSDSYLGRFLTIVIASLSSLLGMVVLWLTAMLPQVKPSPCVATAGTNCSSATSSQLALLYTAFALISIGSGGIRPCSLAFGADQLDNKENPKNERVLESFFGWYYASSSVAVLIAFTVIVYIQDHLGWKIGFGIPAILMLLAGFLFVFASPLYVKRDVSKSLFTGLAQVVAAAYVKRNLTLPDHHDSRDCYYRLKDSELKAPSDKLRFLNKACAISNRDEDLGSDGLALNQWRLCTTDQVEKLKALVKVIPVWSTGIMMSINVSQNSFQLLQAKSMDRRLSSNSTFQIPAGSFGMFTIIALISWVVLYDRAILPLASKIRGRPVRVNVKIRMGLGLFISFLAMAVSATVEHYRRKTAISQGLANDANSTVSISAMWLVPQYVLHGLAEALTGIGQTEFFYTEFPKSMSSIAASLFGLGMAVANILASVILNAVKNSSKQGNVSWIEDNINKGHYDYYYWVLAILSFVNVIYYVVCSWSYGPTVDQVRNDKVNGMRKEEEEVIKLN.

The next 11 helical transmembrane spans lie at 68-88, 98-118, 139-159, 186-206, 216-236, 329-349, 374-394, 418-438, 460-480, 496-516, and 543-563; these read TVLF…AFLS, IVIA…TAML, SSQL…SGGI, FFGW…TVIV, IGFG…VFAS, LKAL…SINV, IPAG…VVLY, MGLG…VEHY, AMWL…TGIG, IAAS…SVIL, and YYWV…VCSW.

It belongs to the major facilitator superfamily. Proton-dependent oligopeptide transporter (POT/PTR) (TC 2.A.17) family. In terms of tissue distribution, expressed in siliques, shoots and roots. Mainly detected in larger expanded leaves, in the companion cells of major veins.

The protein resides in the cell membrane. In terms of biological role, low-affinity nitrate transporter involved in xylem-to-phloem transfer for redistributing nitrate into developing leaves. Not involved in dipeptides transport. This is Protein NRT1/ PTR FAMILY 1.1 (NPF1.1) from Arabidopsis thaliana (Mouse-ear cress).